We begin with the raw amino-acid sequence, 282 residues long: Aspergillopepsin-2 (282 aa).

Residues 1 to 18 (MKFSTILTGSLFATAALA) form the signal peptide. Propeptides lie at residues 19-59 (APLT…GTTN) and 99-109 (GGGYGYWKNKR). A compositionally biased stretch (basic residues) spans 27–39 (ARKEARAAGKRHS). Residues 27-46 (ARKEARAAGKRHSNPPYIPG) are disordered. At Gln110 the chain carries Pyrrolidone carboxylic acid. 2 disulfides stabilise this stretch: Cys115–Cys139 and Cys127–Cys210.

This sequence belongs to the peptidase G1 family. As to quaternary structure, heterodimer of two noncovalently bound light and heavy chains.

The catalysed reaction is Preferential cleavage in B chain of insulin: 3-Asn-|-Gln-4, 13-Gly-|-Ala-14, and 26-Tyr-|-Thr-27.. The protein is Aspergillopepsin-2 of Aspergillus niger.